The following is a 546-amino-acid chain: Glutamyl-tRNA(Gln) amidotransferase subunit A, chloroplastic/mitochondrial (546 aa).

The segment at 21-52 (KRRRFHSSTPLFLSQPQTLASTDPPSSPPQSQ) is disordered. A compositionally biased stretch (polar residues) spans 27–43 (SSTPLFLSQPQTLASTD). Active-site charge relay system residues include K123 and S198. S222 serves as the catalytic Acyl-ester intermediate.

It belongs to the amidase family. GatA subfamily. As to quaternary structure, subunit of the heterotrimeric GatCAB amidotransferase (AdT) complex, composed of A, B and C subunits.

The protein resides in the mitochondrion. It localises to the plastid. The protein localises to the chloroplast stroma. It carries out the reaction L-glutamyl-tRNA(Gln) + L-glutamine + ATP + H2O = L-glutaminyl-tRNA(Gln) + L-glutamate + ADP + phosphate + H(+). In terms of biological role, allows the formation of correctly charged Gln-tRNA(Gln) through the transamidation of misacylated Glu-tRNA(Gln) in chloroplasts and mitochondria. The reaction takes place in the presence of glutamine and ATP through an activated gamma-phospho-Glu-tRNA(Gln). The polypeptide is Glutamyl-tRNA(Gln) amidotransferase subunit A, chloroplastic/mitochondrial (Vitis vinifera (Grape)).